Here is a 334-residue protein sequence, read N- to C-terminus: Glucokinase-like protein PD_0680 (334 aa).

ATP is bound at residue 18–23 (ADVGGT).

The protein belongs to the bacterial glucokinase family.

The protein is Glucokinase-like protein PD_0680 of Xylella fastidiosa (strain Temecula1 / ATCC 700964).